The chain runs to 364 residues: Peptide chain release factor 1 (364 aa).

Glutamine 230 carries the N5-methylglutamine modification.

This sequence belongs to the prokaryotic/mitochondrial release factor family. Post-translationally, methylated by PrmC. Methylation increases the termination efficiency of RF1.

The protein resides in the cytoplasm. In terms of biological role, peptide chain release factor 1 directs the termination of translation in response to the peptide chain termination codons UAG and UAA. The polypeptide is Peptide chain release factor 1 (Acidothermus cellulolyticus (strain ATCC 43068 / DSM 8971 / 11B)).